The following is a 96-amino-acid chain: Evasin P1078 (96 aa).

The N-terminal stretch at 1-28 (MAFNTITFLQWAVFVAILFNMNLHSASA) is a signal peptide. 3 disulfide bridges follow: C48/C67, C52/C69, and C63/C80. An N-linked (GlcNAc...) asparagine glycan is attached at N51. An N-linked (GlcNAc...) asparagine glycan is attached at N74.

The protein localises to the secreted. Functionally, salivary chemokine-binding protein which binds to host chemokines CXCL1, CXCL2, CXCL3, CXCL5, CXCL6, CXCL11 and CXCL13. The polypeptide is Evasin P1078 (Ixodes ricinus (Common tick)).